The primary structure comprises 239 residues: Phosphoribosylaminoimidazole-succinocarboxamide synthase (239 aa).

The protein belongs to the SAICAR synthetase family.

The catalysed reaction is 5-amino-1-(5-phospho-D-ribosyl)imidazole-4-carboxylate + L-aspartate + ATP = (2S)-2-[5-amino-1-(5-phospho-beta-D-ribosyl)imidazole-4-carboxamido]succinate + ADP + phosphate + 2 H(+). It functions in the pathway purine metabolism; IMP biosynthesis via de novo pathway; 5-amino-1-(5-phospho-D-ribosyl)imidazole-4-carboxamide from 5-amino-1-(5-phospho-D-ribosyl)imidazole-4-carboxylate: step 1/2. The protein is Phosphoribosylaminoimidazole-succinocarboxamide synthase of Campylobacter hominis (strain ATCC BAA-381 / DSM 21671 / CCUG 45161 / LMG 19568 / NCTC 13146 / CH001A).